We begin with the raw amino-acid sequence, 650 residues long: Probable LIM domain-containing serine/threonine-protein kinase DDB_G0287001 (650 aa).

2 LIM zinc-binding domains span residues 4–63 (NNCG…KLNA) and 64–122 (RKCF…PSDK). 3 disordered regions span residues 118–138 (KPSDKTKTTTPPPSEIPLPGK), 171–197 (LSSSGGSGNSISGSGGTNTGSSTSSFM), and 293–320 (LLNSSSPSPSTSSTSSTSSISQSQNLNT). Positions 173–188 (SSGGSGNSISGSGGTN) are enriched in gly residues. One can recognise a Protein kinase domain in the interval 386–643 (VAFGDVIASG…DTLKKISESL (258 aa)). Residues 392 to 400 (IASGASGKV) and lysine 413 each bind ATP. Catalysis depends on aspartate 509, which acts as the Proton acceptor.

The protein belongs to the protein kinase superfamily. TKL Ser/Thr protein kinase family.

The enzyme catalyses L-seryl-[protein] + ATP = O-phospho-L-seryl-[protein] + ADP + H(+). It carries out the reaction L-threonyl-[protein] + ATP = O-phospho-L-threonyl-[protein] + ADP + H(+). This Dictyostelium discoideum (Social amoeba) protein is Probable LIM domain-containing serine/threonine-protein kinase DDB_G0287001.